Here is a 107-residue protein sequence, read N- to C-terminus: Large ribosomal subunit protein bL21 (107 aa).

This sequence belongs to the bacterial ribosomal protein bL21 family. In terms of assembly, part of the 50S ribosomal subunit. Contacts protein L20.

Functionally, this protein binds to 23S rRNA in the presence of protein L20. The protein is Large ribosomal subunit protein bL21 of Buchnera aphidicola subsp. Schizaphis graminum (strain Sg).